The following is a 504-amino-acid chain: 26S proteasome non-ATPase regulatory subunit 3 (504 aa).

One can recognise a PCI domain in the interval Ala-254–Asp-434. Positions Lys-485–Phe-504 are disordered. The span at Glu-494–Phe-504 shows a compositional bias: acidic residues.

The protein belongs to the proteasome subunit S3 family. As to quaternary structure, the 26S proteasome is composed of a core protease, known as the 20S proteasome, capped at one or both ends by the 19S regulatory complex (RC). The RC is composed of at least 18 different subunits in two subcomplexes, the base and the lid, which form the portions proximal and distal to the 20S proteolytic core, respectively.

In terms of biological role, acts as a regulatory subunit of the 26 proteasome which is involved in the ATP-dependent degradation of ubiquitinated proteins. The polypeptide is 26S proteasome non-ATPase regulatory subunit 3 (psmD3) (Dictyostelium discoideum (Social amoeba)).